The primary structure comprises 231 residues: Maleylacetoacetate isomerase maiA (231 aa).

The 87-residue stretch at 7 to 93 (PKVTLYTYFR…YLEEITPASS (87 aa)) folds into the GST N-terminal domain. The GST C-terminal domain occupies 102-224 (NPEARAVVRT…HWRTQPDTPE (123 aa)).

The protein belongs to the GST superfamily. Zeta family.

It carries out the reaction 4-maleylacetoacetate = 4-fumarylacetoacetate. The protein operates within amino-acid degradation; L-phenylalanine degradation; acetoacetate and fumarate from L-phenylalanine: step 5/6. Functionally, maleylacetoacetate isomerase; part of the L-tyrosine degradation gene cluster that mediates the biosynthesis of the brownish pigment pyomelanin as an alternative melanin. The 4-hydroxyphenylpyruvate dioxygenase hppD catalyzes the conversion of 4-hydroxyphenylpyruvate to homogentisic acid (HGA). The protein hmgX is crucial for this conversion and thus, probably functions as an accessory factor to mediate specific activity of hppD. The homogentisate 1,2-dioxygenase hmgA is then involved in the cleavage of the aromatic ring of HGA and its conversion to 4-maleylacetoacetate. When hmgA activity is lowered by the cell wall integrity (CWI) signaling pathway, HGA accumulates and leads to the production of pyomelanin through benzoquinone acetic acid after oxidation and polymerization. On the opposite, in non-stress conditions, both hppD and hmgA activities are balanced and HGA is degraded into 4-maleylacetoacetate. 4-maleylacetoacetate is further converted to 4-fumarylacetoacetate by the maleylacetoacetate isomerase maiA, which is degraded into fumarate and acetoacetate by the fumarylacetoacetase fahA. The chain is Maleylacetoacetate isomerase maiA from Aspergillus fumigatus (strain ATCC MYA-4609 / CBS 101355 / FGSC A1100 / Af293) (Neosartorya fumigata).